A 324-amino-acid chain; its full sequence is uncharacterized protein (324 aa).

Helical transmembrane passes span 34–54 (MAVL…FYVL), 76–96 (VFMA…NVGL), 103–123 (IYQM…TTLL), 127–147 (IGQL…IVGY), 158–178 (PILG…QFTI), 198–218 (GTYG…FIGS), 243–263 (YVIS…GLAI), 275–295 (LDIA…MESF), and 297–317 (LLQF…HSII).

It is found in the membrane. This is an uncharacterized protein from Schizosaccharomyces pombe (strain 972 / ATCC 24843) (Fission yeast).